The sequence spans 53 residues: UPF0391 membrane protein TM1040_2720 (53 aa).

2 consecutive transmembrane segments (helical) span residues 4–24 (WALA…GGIA) and 29–48 (GIAQ…ALIL).

This sequence belongs to the UPF0391 family.

Its subcellular location is the cell membrane. The chain is UPF0391 membrane protein TM1040_2720 from Ruegeria sp. (strain TM1040) (Silicibacter sp.).